A 562-amino-acid polypeptide reads, in one-letter code: Undecaprenyl phosphate-alpha-4-amino-4-deoxy-L-arabinose arabinosyl transferase (562 aa).

12 helical membrane-spanning segments follow: residues 14–34, 91–111, 120–140, 142–162, 186–206, 215–235, 267–287, 302–322, 324–344, 354–374, 395–415, and 425–445; these read IKFS…PLNY, FSVR…IYLF, ILSL…IIGT, SVLD…FWLA, FITK…IWLF, TIIH…PWIY, PFWY…GFLF, IEFY…ISKG, LPTY…KNIE, LLKI…IFII, LILC…IIFN, and LSII…IIYA.

It belongs to the glycosyltransferase 83 family.

It localises to the cell inner membrane. The enzyme catalyses 4-amino-4-deoxy-alpha-L-arabinopyranosyl di-trans,octa-cis-undecaprenyl phosphate + lipid IVA = lipid IIA + di-trans,octa-cis-undecaprenyl phosphate.. It functions in the pathway lipopolysaccharide metabolism; 4-amino-4-deoxy-beta-L-arabinose-lipid A biosynthesis. Its function is as follows. Catalyzes the transfer of the L-Ara4N moiety of the glycolipid undecaprenyl phosphate-alpha-L-Ara4N to lipid A. The modified arabinose is attached to lipid A and is required for resistance to polymyxin and cationic antimicrobial peptides. The polypeptide is Undecaprenyl phosphate-alpha-4-amino-4-deoxy-L-arabinose arabinosyl transferase (Wigglesworthia glossinidia brevipalpis).